Reading from the N-terminus, the 303-residue chain is RELT-like protein 2 (303 aa).

The helical transmembrane segment at 15 to 35 (LYMLFLLVLVFFLMGLVGFMI) threads the bilayer. 3 disordered regions span residues 47-68 (RTSRGSEPDDAQLQPPEDDDVN), 135-214 (CSRS…QPRT), and 249-303 (PCTL…AGGM). S52 carries the phosphoserine modification. Basic and acidic residues-rich tracts occupy residues 148–158 (RSKEGKSRPRP) and 172–188 (THIEKRYGLHEHRDGSP). A compositionally biased stretch (gly residues) spans 194-212 (GSGGGQEPGGSQAAGGGQP). The span at 274–295 (GLSSQEANGQPTKLDTSGQQES) shows a compositional bias: polar residues.

The protein belongs to the RELT family. In terms of assembly, interacts with RELT, RELL1, OXSR1, PLSCR1 and TRAF2.

It localises to the cell membrane. Its function is as follows. Induces activation of MAPK14/p38 cascade, when overexpressed. Induces apoptosis, when overexpressed. This is RELT-like protein 2 (Rell2) from Mus musculus (Mouse).